A 359-amino-acid chain; its full sequence is 1-deoxy-D-xylulose 5-phosphate reductoisomerase (359 aa).

Positions 7, 8, 9, 10, 31, 32, 33, and 111 each coordinate NADPH. Lysine 112 serves as a coordination point for 1-deoxy-D-xylulose 5-phosphate. Position 113 (glutamate 113) interacts with NADPH. Aspartate 131 is a binding site for Mn(2+). Serine 132, glutamate 133, serine 155, and histidine 178 together coordinate 1-deoxy-D-xylulose 5-phosphate. Residue glutamate 133 participates in Mn(2+) binding. Glycine 184 contacts NADPH. Serine 191, asparagine 196, lysine 197, and glutamate 200 together coordinate 1-deoxy-D-xylulose 5-phosphate. Residue glutamate 200 coordinates Mn(2+).

The protein belongs to the DXR family. The cofactor is Mg(2+). Mn(2+) is required as a cofactor.

It catalyses the reaction 2-C-methyl-D-erythritol 4-phosphate + NADP(+) = 1-deoxy-D-xylulose 5-phosphate + NADPH + H(+). It functions in the pathway isoprenoid biosynthesis; isopentenyl diphosphate biosynthesis via DXP pathway; isopentenyl diphosphate from 1-deoxy-D-xylulose 5-phosphate: step 1/6. In terms of biological role, catalyzes the NADPH-dependent rearrangement and reduction of 1-deoxy-D-xylulose-5-phosphate (DXP) to 2-C-methyl-D-erythritol 4-phosphate (MEP). The sequence is that of 1-deoxy-D-xylulose 5-phosphate reductoisomerase from Campylobacter lari (strain RM2100 / D67 / ATCC BAA-1060).